A 262-amino-acid chain; its full sequence is MGQKIHPTGFRLAVSRNWASRWYASNTQFAGMLKEDIEVREFLKKKLKNASVGRVVIERPAKNARITIYSSRPGVVIGKKGEDIELLKAELQRRMGVPVHVNIEEIRKPEVDAQLIADSITQQLERRIMFRRAMKRAMQNAMRLGAQGIKIMSSGRLNGIEIARTEWYREGRVPLHTLRADIDYGFSEAETTYGIIGVKVWVYKGDHLGRNDAPVVEEPQEERRKRPGRPEGRRREGEGRPAGQRRGAGAGARRGTDAKTGE.

The KH type-2 domain maps to 39-107; it reads VREFLKKKLK…PVHVNIEEIR (69 aa). Positions 211–262 are disordered; the sequence is NDAPVVEEPQEERRKRPGRPEGRRREGEGRPAGQRRGAGAGARRGTDAKTGE. The segment covering 221–239 has biased composition (basic and acidic residues); the sequence is EERRKRPGRPEGRRREGEG.

It belongs to the universal ribosomal protein uS3 family. In terms of assembly, part of the 30S ribosomal subunit. Forms a tight complex with proteins S10 and S14.

Functionally, binds the lower part of the 30S subunit head. Binds mRNA in the 70S ribosome, positioning it for translation. The sequence is that of Small ribosomal subunit protein uS3 from Ralstonia pickettii (strain 12J).